Here is a 205-residue protein sequence, read N- to C-terminus: Ribosomal RNA small subunit methyltransferase G (205 aa).

Residues G66, F71, 119–120 (IE), and R135 each bind S-adenosyl-L-methionine.

The protein belongs to the methyltransferase superfamily. RNA methyltransferase RsmG family.

The protein localises to the cytoplasm. The enzyme catalyses guanosine(527) in 16S rRNA + S-adenosyl-L-methionine = N(7)-methylguanosine(527) in 16S rRNA + S-adenosyl-L-homocysteine. In terms of biological role, specifically methylates the N7 position of guanine in position 527 of 16S rRNA. The chain is Ribosomal RNA small subunit methyltransferase G from Rhizobium rhizogenes (strain K84 / ATCC BAA-868) (Agrobacterium radiobacter).